The following is a 949-amino-acid chain: Inactive atromentin synthetase invA3 (949 aa).

An adenylation (A) domain region spans residues 38–460; that stretch reads RAVSQYPNHE…SGRIKDTVVV (423 aa). The Carrier domain maps to 592–670; sequence ALSTETEKTL…NLAKYVDSLV (79 aa). The thiolation and peptide carrier (T) domain stretch occupies residues 597–667; that stretch reads TEKTLAGIYA…VISNLAKYVD (71 aa). An O-(pantetheine 4'-phosphoryl)serine modification is found at Ser629. The thioesterase (TE) domain stretch occupies residues 693–934; sequence PIFMVHPGMA…YTLMDFDHVA (242 aa).

The protein belongs to the ATP-dependent AMP-binding enzyme family.

Inactive atromentin synthetase homolog. While the invA3 adenylation (A) domain is capable of adenylating 4-hydroxyphenylpyruvate (4-HPP), the invA3 enzyme is inactive because of its non-functional thioesterase (TE) domain. This chain is Inactive atromentin synthetase invA3 (invA3), found in Paxillus involutus (Naked brimcap).